Reading from the N-terminus, the 865-residue chain is DNA topoisomerase 1 (865 aa).

The region spanning 3–142 (KALVIVESPA…RYSRVVFNEI (140 aa)) is the Toprim domain. Glu9 provides a ligand contact to Mg(2+). Residues 37–65 (LPTSGSAAKKSADSTSTKTAKKPKKDERG) are disordered. Residues 39–54 (TSGSAAKKSADSTSTK) show a composition bias toward low complexity. Asp111 is a binding site for Mg(2+). A Topo IA-type catalytic domain is found at 158-575 (NIDRVNAQQA…HFFSDFTQQL (418 aa)). The tract at residues 192–197 (SAGRVQ) is interaction with DNA. Residue Tyr319 is the O-(5'-phospho-DNA)-tyrosine intermediate of the active site. C4-type zinc fingers lie at residues 599 to 630 (CPTCGRKMGIRTASTGVFLGCSGYALPPKERC), 662 to 689 (CPKCGTAMDSYLIDPKRKLHVCGNNPTC), and 711 to 736 (CEKCGSEMHLKMGRFGKYMACTNEEC).

This sequence belongs to the type IA topoisomerase family. In terms of assembly, monomer. Requires Mn(2+) as cofactor. The cofactor is Ca(2+).

The catalysed reaction is ATP-independent breakage of single-stranded DNA, followed by passage and rejoining.. In terms of biological role, releases the supercoiling and torsional tension of DNA, which is introduced during the DNA replication and transcription, by transiently cleaving and rejoining one strand of the DNA duplex. Introduces a single-strand break via transesterification at a target site in duplex DNA. The scissile phosphodiester is attacked by the catalytic tyrosine of the enzyme, resulting in the formation of a DNA-(5'-phosphotyrosyl)-enzyme intermediate and the expulsion of a 3'-OH DNA strand. The free DNA strand then undergoes passage around the unbroken strand, thus removing DNA supercoils. Finally, in the religation step, the DNA 3'-OH attacks the covalent intermediate to expel the active-site tyrosine and restore the DNA phosphodiester backbone. In Escherichia coli (strain K12), this protein is DNA topoisomerase 1.